A 227-amino-acid polypeptide reads, in one-letter code: UPF0758 protein PG_0894 (227 aa).

The MPN domain occupies 104-227 (SITDSRMAYR…YFSFADEGLL (124 aa)). Zn(2+) is bound by residues histidine 175, histidine 177, and aspartate 188. Positions 175 to 188 (HNHPSGTVRPSEQD) match the JAMM motif motif.

The protein belongs to the UPF0758 family.

The chain is UPF0758 protein PG_0894 from Porphyromonas gingivalis (strain ATCC BAA-308 / W83).